Consider the following 331-residue polypeptide: Ornithine carbamoyltransferase (331 aa).

Carbamoyl phosphate is bound by residues 55–58 (STRT), Q82, R106, and 133–136 (HPTQ). Residues N166, D230, and 234-235 (SM) each bind L-ornithine. Residues 272 to 273 (CL) and R317 contribute to the carbamoyl phosphate site.

The protein belongs to the aspartate/ornithine carbamoyltransferase superfamily. OTCase family.

It localises to the cytoplasm. It catalyses the reaction carbamoyl phosphate + L-ornithine = L-citrulline + phosphate + H(+). It participates in amino-acid biosynthesis; L-arginine biosynthesis; L-arginine from L-ornithine and carbamoyl phosphate: step 1/3. Its function is as follows. Reversibly catalyzes the transfer of the carbamoyl group from carbamoyl phosphate (CP) to the N(epsilon) atom of ornithine (ORN) to produce L-citrulline. The chain is Ornithine carbamoyltransferase (argF) from Neisseria meningitidis serogroup B (strain ATCC BAA-335 / MC58).